Reading from the N-terminus, the 476-residue chain is Glycogen synthase (476 aa).

Residue lysine 15 coordinates ADP-alpha-D-glucose.

This sequence belongs to the glycosyltransferase 1 family. Bacterial/plant glycogen synthase subfamily.

The catalysed reaction is [(1-&gt;4)-alpha-D-glucosyl](n) + ADP-alpha-D-glucose = [(1-&gt;4)-alpha-D-glucosyl](n+1) + ADP + H(+). It participates in glycan biosynthesis; glycogen biosynthesis. In terms of biological role, synthesizes alpha-1,4-glucan chains using ADP-glucose. The polypeptide is Glycogen synthase (Actinobacillus succinogenes (strain ATCC 55618 / DSM 22257 / CCUG 43843 / 130Z)).